We begin with the raw amino-acid sequence, 466 residues long: Delta-1 crystallin (466 aa).

The protein belongs to the lyase 1 family. Argininosuccinate lyase subfamily. In terms of assembly, homotetramer. Eye lens.

Its function is as follows. Delta crystallin, the principal crystallin in embryonic lens, is found only in birds and reptiles. In Meleagris gallopavo (Wild turkey), this protein is Delta-1 crystallin (ASL1).